A 492-amino-acid polypeptide reads, in one-letter code: G protein-activated inward rectifier potassium channel 1 (492 aa).

Residues 1-72 lie on the Cytoplasmic side of the membrane; sequence MSALRRKLGD…LFTTLVDLKW (72 aa). Positions 16 to 35 are disordered; that stretch reads STSASGGGLPPPRAAPRGKR. A helical membrane pass occupies residues 73–97; that stretch reads RWNLFIFVLTYTVAWLFMASMWWVI. Residues 98 to 121 are Extracellular-facing; sequence AYMRGDLNKAHDDSYTPCVANVYN. The helical; Pore-forming intramembrane region spans 122 to 133; that stretch reads FPSAFLFFIETE. The pore-forming intramembrane region spans 134-140; that stretch reads ATIGYGY. Positions 135–140 match the Selectivity filter motif; it reads TIGYGY. The Extracellular portion of the chain corresponds to 141 to 149; the sequence is RYITDKCPE. Residues 150–171 traverse the membrane as a helical segment; that stretch reads GIILFLFQSILGSIVDAFLIGC. Residues 172 to 492 are Cytoplasmic-facing; that stretch reads MFIKMSQPKK…LRKMNSDRFT (321 aa). The interval 174-201 is polyphosphoinositide (PIP2)-binding; it reads IKMSQPKKRAETLMFSEHAAISMRDGKL. The tract at residues 452-492 is disordered; the sequence is SDPMSQSVADLPPKLQKLSGGGRMEGNLPPKLRKMNSDRFT.

The protein belongs to the inward rectifier-type potassium channel (TC 1.A.2.1) family. KCNJ3 subfamily. In terms of assembly, associates with KCNJ5/GIRK4 or KCNJ6/GIRK2 or KCNJ9/GIRK3 to form a G-protein activated heteromultimer pore-forming unit. The resulting inward current is much larger.

It localises to the membrane. It catalyses the reaction K(+)(in) = K(+)(out). Its activity is regulated as follows. Heteromultimer composed of KCNJ3/GIRK1 and KCNJ5/GIRK4 is activated by phosphatidylinositol 4,5 biphosphate (PtdIns(4,5)P2). Functionally, inward rectifier potassium channels are characterized by a greater tendency to allow potassium to flow into the cell rather than out of it. Their voltage dependence is regulated by the concentration of extracellular potassium; as external potassium is raised, the voltage range of the channel opening shifts to more positive voltages. The inward rectification is mainly due to the blockage of outward current by internal magnesium. This potassium channel is controlled by G proteins. This receptor plays a crucial role in regulating the heartbeat. This chain is G protein-activated inward rectifier potassium channel 1 (KCNJ3), found in Gallus gallus (Chicken).